The primary structure comprises 179 residues: Alkyl hydroperoxide reductase AhpD (179 aa).

Cys-130 acts as the Proton donor in catalysis. An intrachain disulfide couples Cys-130 to Cys-133. Cys-133 acts as the Cysteine sulfenic acid (-SOH) intermediate in catalysis.

The protein belongs to the AhpD family. As to quaternary structure, homotrimer.

The enzyme catalyses N(6)-[(R)-dihydrolipoyl]-L-lysyl-[lipoyl-carrier protein] + a hydroperoxide = N(6)-[(R)-lipoyl]-L-lysyl-[lipoyl-carrier protein] + an alcohol + H2O. Functionally, antioxidant protein with alkyl hydroperoxidase activity. Required for the reduction of the AhpC active site cysteine residues and for the regeneration of the AhpC enzyme activity. In Nocardia farcinica (strain IFM 10152), this protein is Alkyl hydroperoxide reductase AhpD.